The following is a 78-amino-acid chain: UPF0349 protein BH3414 (78 aa).

This sequence belongs to the UPF0349 family.

The protein is UPF0349 protein BH3414 of Halalkalibacterium halodurans (strain ATCC BAA-125 / DSM 18197 / FERM 7344 / JCM 9153 / C-125) (Bacillus halodurans).